We begin with the raw amino-acid sequence, 474 residues long: Type I restriction enzyme EcoBI specificity subunit (474 aa).

This sequence belongs to the type-I restriction system S methylase family. The type I restriction/modification system is composed of three polypeptides R, M and S. The restriction enzyme has stoichiometry R(2)M(2)S(1) while the methyltransferase is M(2)S(1).

In terms of biological role, the specificity (S) subunit of a type I restriction enzyme; this subunit dictates DNA sequence specificity. The M and S subunits together form a methyltransferase (MTase) that methylates A-3 on the top strand and A-4 on the bottom strand of the sequence 5'-TGAN(8)TGCT-3'. In the presence of the R subunit the complex can also act as an endonuclease, binding to the same target sequence but cutting the DNA some distance from this site. Whether the DNA is cut or modified depends on the methylation state of the target sequence. When the target site is unmodified, the DNA is cut. When the target site is hemimethylated, the complex acts as a maintenance MTase modifying the DNA so that both strands become methylated. After locating a non-methylated recognition site, the enzyme complex serves as a molecular motor that translocates DNA in an ATP-dependent manner until a collision occurs that triggers cleavage. This chain is Type I restriction enzyme EcoBI specificity subunit, found in Escherichia coli.